Reading from the N-terminus, the 189-residue chain is HTH-type transcriptional repressor LfrR (189 aa).

The HTH tetR-type domain occupies 12–70 (ERTRRAILDAAMLVLADHPTAALGDIAAAAGVGRSTVHRYYPERTDLLRALARHVHDLS). Positions 33–52 (ALGDIAAAAGVGRSTVHRYY) form a DNA-binding region, H-T-H motif. The tract at residues 70–71 (SN) is proflavine binding.

In terms of assembly, homodimer. Forms a structurally asymmetric homodimer exhibiting local unfolding and a blocked drug-binding site.

Its activity is regulated as follows. Repressor activity is regulated by binding of different substrates of the LfrA multidrug efflux pump, such as acriflavine, proflavine, ethidium bromide and rhodamine 123. Binding of these ligands causes the dissociation of LfrR from the promoter, inducing lfrA expression. In terms of biological role, represses the transcription of the lfrRA operon by binding directly to the promoter region of lfrR-lfrA. Binds specifically to a 143-bp region upstream of the lfrR gene. The polypeptide is HTH-type transcriptional repressor LfrR (Mycolicibacterium smegmatis (strain ATCC 700084 / mc(2)155) (Mycobacterium smegmatis)).